Here is a 739-residue protein sequence, read N- to C-terminus: AN1-type zinc finger protein 4 (739 aa).

A Ubiquitin-like domain is found at M54–G129. Residues K246–P255 show a composition bias toward basic residues. Disordered regions lie at residues K246–A270 and L287–S316. An AN1-type zinc finger spans residues K673–G720. Positions 679, 682, 694, 696, 701, 704, 710, and 712 each coordinate Zn(2+).

The sequence is that of AN1-type zinc finger protein 4 (Zfand4) from Mus musculus (Mouse).